A 203-amino-acid chain; its full sequence is Holliday junction branch migration complex subunit RuvA (203 aa).

Positions 1-64 (MIGRLRGIIL…EDAQLLYGFN (64 aa)) are domain I. The segment at 65 to 142 (NKQERTLFKE…KGLHGDLFTP (78 aa)) is domain II. The tract at residues 143–154 (AADLVLTSPASP) is flexible linker. A domain III region spans residues 155 to 203 (ATDDAEQEAVAALVALGYKPQEASRMVSKIARPDASSETLIREALRAAL).

Belongs to the RuvA family. In terms of assembly, homotetramer. Forms an RuvA(8)-RuvB(12)-Holliday junction (HJ) complex. HJ DNA is sandwiched between 2 RuvA tetramers; dsDNA enters through RuvA and exits via RuvB. An RuvB hexamer assembles on each DNA strand where it exits the tetramer. Each RuvB hexamer is contacted by two RuvA subunits (via domain III) on 2 adjacent RuvB subunits; this complex drives branch migration. In the full resolvosome a probable DNA-RuvA(4)-RuvB(12)-RuvC(2) complex forms which resolves the HJ.

The protein localises to the cytoplasm. Functionally, the RuvA-RuvB-RuvC complex processes Holliday junction (HJ) DNA during genetic recombination and DNA repair, while the RuvA-RuvB complex plays an important role in the rescue of blocked DNA replication forks via replication fork reversal (RFR). RuvA specifically binds to HJ cruciform DNA, conferring on it an open structure. The RuvB hexamer acts as an ATP-dependent pump, pulling dsDNA into and through the RuvAB complex. HJ branch migration allows RuvC to scan DNA until it finds its consensus sequence, where it cleaves and resolves the cruciform DNA. This Citrobacter koseri (strain ATCC BAA-895 / CDC 4225-83 / SGSC4696) protein is Holliday junction branch migration complex subunit RuvA.